Reading from the N-terminus, the 139-residue chain is Proline-rich protein 13 (139 aa).

Positions 1–139 are disordered; sequence MWNPSAGPNP…SSSSSSSDSD (139 aa). Pro residues-rich tracts occupy residues 24 to 62 and 70 to 91; these read ACPPSQNPAFPPGPCPPGIPQGNPAFPPCRPPYPVPQPG and GPYPPPYPPAAPGMCPVNPPAP. Basic residues predominate over residues 103–124; sequence KTRKKMKKAHKKSHKHHKHGKH. Low complexity predominate over residues 125–139; it reads SSSSSSSSSSSSDSD.

The protein resides in the nucleus. In terms of biological role, negatively regulates TSP1 expression at the level of transcription. This down-regulation was shown to reduce taxane-induced apoptosis. The polypeptide is Proline-rich protein 13 (Prr13) (Rattus norvegicus (Rat)).